We begin with the raw amino-acid sequence, 804 residues long: Phenylalanine--tRNA ligase beta subunit (804 aa).

The tRNA-binding domain occupies 39 to 155; that stretch reads AEGLKKIVVG…ADVKPGEEVY (117 aa). Positions 408–483 constitute a B5 domain; it reads RNPSVVKTTV…RIYGYDNLKS (76 aa). Residues D461, D467, E470, and E471 each coordinate Mg(2+). Residues 711–804 enclose the FDX-ACB domain; that stretch reads PKFPAIERDL…LKESLKIKVR (94 aa).

It belongs to the phenylalanyl-tRNA synthetase beta subunit family. Type 1 subfamily. Tetramer of two alpha and two beta subunits. Requires Mg(2+) as cofactor.

It is found in the cytoplasm. It catalyses the reaction tRNA(Phe) + L-phenylalanine + ATP = L-phenylalanyl-tRNA(Phe) + AMP + diphosphate + H(+). This Lactobacillus johnsonii (strain CNCM I-12250 / La1 / NCC 533) protein is Phenylalanine--tRNA ligase beta subunit.